We begin with the raw amino-acid sequence, 450 residues long: Na(+)/H(+) antiporter NhaA (450 aa).

Transmembrane regions (helical) follow at residues 24 to 44 (FFAI…LALV), 75 to 95 (LILW…GLEI), 111 to 131 (ALPI…YLAL), 140 to 160 (GWGV…SLLG), 169 to 189 (VFLT…IAFF), 196 to 216 (FSFL…NWLG), 224 to 244 (LLVG…ATIA), 318 to 338 (WVAW…TVSA), 352 to 372 (IFFG…WLLV), 390 to 410 (GIGW…TLAF), and 422 to 442 (SILC…RVLL).

It belongs to the NhaA Na(+)/H(+) (TC 2.A.33) antiporter family.

The protein resides in the cell inner membrane. The catalysed reaction is Na(+)(in) + 2 H(+)(out) = Na(+)(out) + 2 H(+)(in). Na(+)/H(+) antiporter that extrudes sodium in exchange for external protons. The sequence is that of Na(+)/H(+) antiporter NhaA from Oleidesulfovibrio alaskensis (strain ATCC BAA-1058 / DSM 17464 / G20) (Desulfovibrio alaskensis).